A 415-amino-acid chain; its full sequence is Homoserine O-succinyltransferase (415 aa).

Polar residues predominate over residues 1–26 (MTSPALTAASVTPSRNTTSPDTTSHR). Residues 1–27 (MTSPALTAASVTPSRNTTSPDTTSHRP) form a disordered region. The region spanning 71-386 (NAVLICHALN…HGHDAFLLED (316 aa)) is the AB hydrolase-1 domain. Serine 177 functions as the Nucleophile in the catalytic mechanism. Arginine 247 is a binding site for substrate. Catalysis depends on residues aspartate 346 and histidine 379. Substrate is bound at residue aspartate 380.

Belongs to the AB hydrolase superfamily. MetX family. As to quaternary structure, homodimer.

The protein resides in the cytoplasm. The enzyme catalyses L-homoserine + succinyl-CoA = O-succinyl-L-homoserine + CoA. Its pathway is amino-acid biosynthesis; L-methionine biosynthesis via de novo pathway; O-succinyl-L-homoserine from L-homoserine: step 1/1. Functionally, transfers a succinyl group from succinyl-CoA to L-homoserine, forming succinyl-L-homoserine. The protein is Homoserine O-succinyltransferase of Bordetella avium (strain 197N).